The sequence spans 457 residues: Chromosomal replication initiator protein DnaA (457 aa).

The domain I, interacts with DnaA modulators stretch occupies residues 1 to 90; the sequence is MAVSLWQQCI…RPSAKPQAPA (90 aa). Residues 79–120 form a disordered region; the sequence is GSRPSAKPQAPAPAAVKAAAPQPKPGNSFVSQPEPAVSNHRS. Residues 84–99 show a composition bias toward low complexity; the sequence is AKPQAPAPAAVKAAAP. Residues 91-120 form a domain II region; that stretch reads PAAVKAAAPQPKPGNSFVSQPEPAVSNHRS. Residues 121-337 are domain III, AAA+ region; that stretch reads NINPTYQFDN…GALNRVIANA (217 aa). Glycine 165, glycine 167, lysine 168, and threonine 169 together coordinate ATP. Residues 338 to 457 form a domain IV, binds dsDNA region; it reads NFTGRPITID…YANLIRTLSS (120 aa).

The protein belongs to the DnaA family. Oligomerizes as a right-handed, spiral filament on DNA at oriC.

Its subcellular location is the cytoplasm. Plays an essential role in the initiation and regulation of chromosomal replication. ATP-DnaA binds to the origin of replication (oriC) to initiate formation of the DNA replication initiation complex once per cell cycle. Binds the DnaA box (a 9 base pair repeat at the origin) and separates the double-stranded (ds)DNA. Forms a right-handed helical filament on oriC DNA; dsDNA binds to the exterior of the filament while single-stranded (ss)DNA is stabiized in the filament's interior. The ATP-DnaA-oriC complex binds and stabilizes one strand of the AT-rich DNA unwinding element (DUE), permitting loading of DNA polymerase. After initiation quickly degrades to an ADP-DnaA complex that is not apt for DNA replication. Binds acidic phospholipids. The polypeptide is Chromosomal replication initiator protein DnaA (Shewanella amazonensis (strain ATCC BAA-1098 / SB2B)).